Consider the following 99-residue polypeptide: Aspartyl/glutamyl-tRNA(Asn/Gln) amidotransferase subunit C (99 aa).

This sequence belongs to the GatC family. In terms of assembly, heterotrimer of A, B and C subunits.

The catalysed reaction is L-glutamyl-tRNA(Gln) + L-glutamine + ATP + H2O = L-glutaminyl-tRNA(Gln) + L-glutamate + ADP + phosphate + H(+). It carries out the reaction L-aspartyl-tRNA(Asn) + L-glutamine + ATP + H2O = L-asparaginyl-tRNA(Asn) + L-glutamate + ADP + phosphate + 2 H(+). Its function is as follows. Allows the formation of correctly charged Asn-tRNA(Asn) or Gln-tRNA(Gln) through the transamidation of misacylated Asp-tRNA(Asn) or Glu-tRNA(Gln) in organisms which lack either or both of asparaginyl-tRNA or glutaminyl-tRNA synthetases. The reaction takes place in the presence of glutamine and ATP through an activated phospho-Asp-tRNA(Asn) or phospho-Glu-tRNA(Gln). This Paraburkholderia phytofirmans (strain DSM 17436 / LMG 22146 / PsJN) (Burkholderia phytofirmans) protein is Aspartyl/glutamyl-tRNA(Asn/Gln) amidotransferase subunit C.